Reading from the N-terminus, the 57-residue chain is DNA-directed RNA polymerase subunit Rpo6 (57 aa).

This sequence belongs to the archaeal Rpo6/eukaryotic RPB6 RNA polymerase subunit family. As to quaternary structure, part of the RNA polymerase complex.

Its subcellular location is the cytoplasm. It carries out the reaction RNA(n) + a ribonucleoside 5'-triphosphate = RNA(n+1) + diphosphate. DNA-dependent RNA polymerase (RNAP) catalyzes the transcription of DNA into RNA using the four ribonucleoside triphosphates as substrates. In Thermococcus gammatolerans (strain DSM 15229 / JCM 11827 / EJ3), this protein is DNA-directed RNA polymerase subunit Rpo6.